An 832-amino-acid polypeptide reads, in one-letter code: Protein P (832 aa).

The tract at residues 1–177 (MPLSCPHFRK…FCGSPYSWEQ (177 aa)) is terminal protein domain (TP). The interval 178-335 (ELQHGAEPVC…YCLSHLVNLL (158 aa)) is spacer. A compositionally biased stretch (low complexity) spans 208 to 224 (KQSRLGLQSQQRQLARS). The disordered stretch occupies residues 208-241 (KQSRLGLQSQQRQLARSHQGRSGSIRARVHSTTR). The tract at residues 336-679 (EDWGPCTEHG…YLTLYPVARQ (344 aa)) is polymerase/reverse transcriptase domain (RT). The Reverse transcriptase domain maps to 346–589 (EHHIRIPRTP…YSLNFMGYII (244 aa)). Mg(2+) contacts are provided by aspartate 418, aspartate 540, and aspartate 541.

The protein belongs to the hepadnaviridae P protein family.

The enzyme catalyses DNA(n) + a 2'-deoxyribonucleoside 5'-triphosphate = DNA(n+1) + diphosphate. It catalyses the reaction Endonucleolytic cleavage to 5'-phosphomonoester.. Activated by host HSP70 and HSP40 in vitro to be able to bind the epsilon loop of the pgRNA. Because deletion of the RNase H region renders the protein partly chaperone-independent, the chaperones may be needed indirectly to relieve occlusion of the RNA-binding site by this domain. Inhibited by several reverse-transcriptase inhibitors: Lamivudine, Adefovir and Entecavir. Multifunctional enzyme that converts the viral RNA genome into dsDNA in viral cytoplasmic capsids. This enzyme displays a DNA polymerase activity that can copy either DNA or RNA templates, and a ribonuclease H (RNase H) activity that cleaves the RNA strand of RNA-DNA heteroduplexes in a partially processive 3'- to 5'-endonucleasic mode. Neo-synthesized pregenomic RNA (pgRNA) are encapsidated together with the P protein, and reverse-transcribed inside the nucleocapsid. Initiation of reverse-transcription occurs first by binding the epsilon loop on the pgRNA genome, and is initiated by protein priming, thereby the 5'-end of (-)DNA is covalently linked to P protein. Partial (+)DNA is synthesized from the (-)DNA template and generates the relaxed circular DNA (RC-DNA) genome. After budding and infection, the RC-DNA migrates in the nucleus, and is converted into a plasmid-like covalently closed circular DNA (cccDNA). The activity of P protein does not seem to be necessary for cccDNA generation, and is presumably released from (+)DNA by host nuclear DNA repair machinery. The chain is Protein P from Gibbon hepatitis B virus subtype ayw3q (isolate Hope) (HBVgbn).